The primary structure comprises 1368 residues: DNA-directed RNA polymerase subunit beta (1368 aa).

The protein belongs to the RNA polymerase beta chain family. The RNAP catalytic core consists of 2 alpha, 1 beta, 1 beta' and 1 omega subunit. When a sigma factor is associated with the core the holoenzyme is formed, which can initiate transcription.

It carries out the reaction RNA(n) + a ribonucleoside 5'-triphosphate = RNA(n+1) + diphosphate. Functionally, DNA-dependent RNA polymerase catalyzes the transcription of DNA into RNA using the four ribonucleoside triphosphates as substrates. In Burkholderia pseudomallei (strain K96243), this protein is DNA-directed RNA polymerase subunit beta.